The primary structure comprises 453 residues: Alpha-galacturonidase (453 aa).

NAD(+) is bound at residue 11–72; sequence IKIAYIGGGS…SQWEYKSVDS (62 aa). Asparagine 151 is a substrate binding site. Cysteine 173 is a Mn(2+) binding site. The active-site Proton donor is the histidine 174. Histidine 209 is a binding site for Mn(2+).

This sequence belongs to the glycosyl hydrolase 4 family. Homotetramer. NAD(+) is required as a cofactor. Mn(2+) serves as cofactor.

It carries out the reaction [(1-&gt;4)-alpha-D-galacturonosyl](n) + H2O = alpha-D-galacturonate + [(1-&gt;4)-alpha-D-galacturonosyl](n-1). Its function is as follows. Alpha-galacturonidase able to catalyze the hydrolysis of the chromogenic substrate p-nitrophenyl-alpha-D-galacturonic acid (pNPalphaGalUA). It is probable that alpha-1,4-di-galacturonate (GalUA(2)) is the naturally occurring substrate. This Thermoanaerobacter italicus (strain DSM 9252 / Ab9) protein is Alpha-galacturonidase.